The following is a 358-amino-acid chain: Branched-chain amino acid aminotransferase gloG (358 aa).

Arg91 contacts pyridoxal 5'-phosphate. Lys195 serves as the catalytic Proton acceptor. Position 195 is an N6-(pyridoxal phosphate)lysine (Lys195). A pyridoxal 5'-phosphate-binding site is contributed by Glu231.

It belongs to the class-IV pyridoxal-phosphate-dependent aminotransferase family. Requires pyridoxal 5'-phosphate as cofactor.

The enzyme catalyses L-isoleucine + 2-oxoglutarate = (S)-3-methyl-2-oxopentanoate + L-glutamate. It catalyses the reaction L-leucine + 2-oxoglutarate = 4-methyl-2-oxopentanoate + L-glutamate. It carries out the reaction L-valine + 2-oxoglutarate = 3-methyl-2-oxobutanoate + L-glutamate. It participates in mycotoxin biosynthesis. Functionally, branched-chain amino acid aminotransferase; part of the gene cluster that mediates the biosynthesis of pneumocandins, lipohexapeptides of the echinocandin family that prevent fungal cell wall formation by non-competitive inhibition of beta-1,3-glucan synthase. The 10,12-dimethylmyristoyl side chain is synthesized by the reducing polyketide synthase gloL/GLPKS4. The thioesterase gloN/GLHYD exclusively interacts with gloL/GLPKS4 to maintain turnover of the polyketide side chain. The 10R,12S-dimethylmyristic acid is then transferred to the first thiolation domain of the nonribosomal peptide synthetase gloA/GLNRPS4 by the acyl-AMP ligase gloD/GLligase, followed by its acylation to L-ornithine to trigger elongation of the cyclic hexapeptide. L-ornithine, 4R-hydroxyl-L-proline (generated from L-proline by the dioxygenase gloF/GLOXY2), 3S-hydroxyl-L-homotyrosine (generated by gloG/GLHtyB, gloH/GLHtyA, gloI/GLHtyC, gloJ/GLHtyD and hydroxylated at C-3 by the dioxygenase gloM/GLOXY1), 3R-hydroxyl-L-glutamine (generated from L-glutamine probably by the dioxygenase gloE/GLOXY3) and 3S-hydroxyl-L-proline (generated from L-proline by the dioxygenase gloF/GLOXY2 to yield pneumocandin B0), or 3S-hydroxyl-4S-methyl-L-proline (generated from L-leucine by the dioxygenase gloC/GLOXY4 to yield pneumocandin A0) are sequentially added to the growing chain. The last C domain of gloA/GLNRPS4 is proposed to be responsible for cyclization by condensation to form the peptide bond between L-ornithine and 3S-hydroxyl-4S-methyl-L-proline (for pneumocandin A0) or 3S-hydroxyl-L-proline (for pneumocandin B0). Finally, the subsequent C-4 hydroxylation of 3S-hydroxyl-L-homotyrosine and L-ornithine dihydroxylation at C-4 and C-5 are performed by the cytochrome P450 monooxygenases gloP/GLP450-1 and gloO/GLP450-2, respectively. The protein is Branched-chain amino acid aminotransferase gloG of Glarea lozoyensis (strain ATCC 20868 / MF5171).